A 233-amino-acid chain; its full sequence is Homeobox protein ceh-30 (233 aa).

The segment covering 50 to 85 (NNSTYSHDLDPSPQSVRSDLSTSPRASSPDRNSPMS) has biased composition (polar residues). 2 disordered regions span residues 50–93 (NNST…KART) and 206–233 (FQAT…SNSD). Positions 88-147 (SRKARTIFTDKQLQELENTFEKQKYLSVQDRMDLAHRMGLSDTQVKTWYQNRRTKWKRQA) form a DNA-binding region, homeobox. Residues 224 to 233 (PQLDVSSNSD) are compositionally biased toward polar residues.

The protein resides in the nucleus. Functionally, cell-type specific anti-apoptotic transcription factor required for the sexually dimorphic survival of the male-specific CEM (cephalic male) sensory neurons during sex determination. In hermaphrodites, the homologous cells undergo programmed cell death due to transcriptional repression of ceh-30 by tra-1, the terminal regulator in the sex determination pathway. The polypeptide is Homeobox protein ceh-30 (Caenorhabditis briggsae).